We begin with the raw amino-acid sequence, 340 residues long: Formimidoylglutamase (340 aa).

His-129, Asp-160, His-162, Asp-164, Asp-257, and Asp-259 together coordinate Mn(2+).

The protein belongs to the arginase family. Requires Mn(2+) as cofactor.

The catalysed reaction is N-formimidoyl-L-glutamate + H2O = formamide + L-glutamate. Its pathway is amino-acid degradation; L-histidine degradation into L-glutamate; L-glutamate from N-formimidoyl-L-glutamate (hydrolase route): step 1/1. Functionally, catalyzes the conversion of N-formimidoyl-L-glutamate to L-glutamate and formamide. The protein is Formimidoylglutamase of Vibrio parahaemolyticus serotype O3:K6 (strain RIMD 2210633).